The chain runs to 91 residues: Small ribosomal subunit protein bS18 (91 aa).

Belongs to the bacterial ribosomal protein bS18 family. Part of the 30S ribosomal subunit. Forms a tight heterodimer with protein bS6.

Its function is as follows. Binds as a heterodimer with protein bS6 to the central domain of the 16S rRNA, where it helps stabilize the platform of the 30S subunit. The sequence is that of Small ribosomal subunit protein bS18 from Paraburkholderia xenovorans (strain LB400).